The primary structure comprises 1274 residues: Polycomb protein Sfmbt (1274 aa).

Residues 266–285 (PSSKQMKGYRNSNSSGTSSA) form a disordered region. Over residues 267–278 (SSKQMKGYRNSN) the composition is skewed to polar residues. The FCS-type zinc finger occupies 331–366 (PIQKDGMAVCERCGAIGVKHTFYTKSRRFCSMACAR). Residues Cys-340, Cys-343, Cys-360, and Cys-364 each coordinate Zn(2+). Positions 381 to 394 (TGATTSNNQSTSSS) are enriched in low complexity. Disordered regions lie at residues 381-401 (TGATTSNNQSTSSSPLPAASG) and 488-510 (PGGEANGSGNDTSTPNTASSGYL). A compositionally biased stretch (polar residues) spans 494–509 (GSGNDTSTPNTASSGY). MBT repeat units follow at residues 564-675 (YDWL…LIPP), 683-781 (KDWK…LAAP), 789-899 (LAGR…VTPP), and 907-1003 (FTWE…LEGP). 2 disordered regions span residues 1007–1063 (SYQQ…TTPH) and 1083–1167 (YENN…NSSA). Basic residues predominate over residues 1019 to 1028 (KVPRKKKTKK). A compositionally biased stretch (low complexity) spans 1038-1050 (AKQQNDNTQTTQT). The segment covering 1087-1114 (QPEDGDGDEEDPDPDADADLDADADGDG) has biased composition (acidic residues). Composition is skewed to polar residues over residues 1117 to 1128 (STSHISEQSTTH) and 1158 to 1167 (GNSNKMNSSA). In terms of domain architecture, SAM spans 1194-1258 (WNVYDVSQFL…DLITQLKCKV (65 aa)).

As to quaternary structure, interacts with pho as a component of the pho-repressive complex (PhoRC).

The protein resides in the nucleus. Functionally, polycomb group (PcG) protein that binds to the Polycomb response elements (PREs) found in the regulatory regions of many genes. PcG proteins act by forming multiprotein complexes, which are required to maintain the transcriptionally repressive state of homeotic genes throughout development. PcG proteins are not required to initiate repression, but to maintain it during later stages of development. They probably act via the methylation of histones, rendering chromatin heritably changed in its expressibility. Necessary but not sufficient to recruit a functional PcG repressive complex that represses target genes, suggesting that the recruitment of the distinct PRC1 complex is also required to allow a subsequent repression. This Drosophila pseudoobscura pseudoobscura (Fruit fly) protein is Polycomb protein Sfmbt.